The following is a 460-amino-acid chain: Bifunctional protein GlmU (460 aa).

The interval 1–235 (MALSAAIVLA…PLTVEGVNDR (235 aa)) is pyrophosphorylase. Residues 9–12 (LAAG), lysine 23, glutamine 76, and 81–82 (GT) each bind UDP-N-acetyl-alpha-D-glucosamine. Aspartate 109 is a binding site for Mg(2+). Residues glycine 146, glutamate 161, asparagine 176, and asparagine 233 each contribute to the UDP-N-acetyl-alpha-D-glucosamine site. Asparagine 233 serves as a coordination point for Mg(2+). The segment at 236–256 (VQLAALSKTYNRRVCERWMRN) is linker. The N-acetyltransferase stretch occupies residues 257-460 (GVTILDPETT…VEGWKPAWER (204 aa)). Arginine 338 and lysine 356 together coordinate UDP-N-acetyl-alpha-D-glucosamine. Histidine 368 serves as the catalytic Proton acceptor. UDP-N-acetyl-alpha-D-glucosamine-binding residues include tyrosine 371 and asparagine 382. Residues 391 to 392 (NY) and alanine 428 contribute to the acetyl-CoA site.

In the N-terminal section; belongs to the N-acetylglucosamine-1-phosphate uridyltransferase family. This sequence in the C-terminal section; belongs to the transferase hexapeptide repeat family. As to quaternary structure, homotrimer. Mg(2+) is required as a cofactor.

The protein localises to the cytoplasm. The catalysed reaction is alpha-D-glucosamine 1-phosphate + acetyl-CoA = N-acetyl-alpha-D-glucosamine 1-phosphate + CoA + H(+). The enzyme catalyses N-acetyl-alpha-D-glucosamine 1-phosphate + UTP + H(+) = UDP-N-acetyl-alpha-D-glucosamine + diphosphate. It participates in nucleotide-sugar biosynthesis; UDP-N-acetyl-alpha-D-glucosamine biosynthesis; N-acetyl-alpha-D-glucosamine 1-phosphate from alpha-D-glucosamine 6-phosphate (route II): step 2/2. Its pathway is nucleotide-sugar biosynthesis; UDP-N-acetyl-alpha-D-glucosamine biosynthesis; UDP-N-acetyl-alpha-D-glucosamine from N-acetyl-alpha-D-glucosamine 1-phosphate: step 1/1. It functions in the pathway bacterial outer membrane biogenesis; LPS lipid A biosynthesis. Functionally, catalyzes the last two sequential reactions in the de novo biosynthetic pathway for UDP-N-acetylglucosamine (UDP-GlcNAc). The C-terminal domain catalyzes the transfer of acetyl group from acetyl coenzyme A to glucosamine-1-phosphate (GlcN-1-P) to produce N-acetylglucosamine-1-phosphate (GlcNAc-1-P), which is converted into UDP-GlcNAc by the transfer of uridine 5-monophosphate (from uridine 5-triphosphate), a reaction catalyzed by the N-terminal domain. The protein is Bifunctional protein GlmU of Bifidobacterium longum subsp. infantis (strain ATCC 15697 / DSM 20088 / JCM 1222 / NCTC 11817 / S12).